A 461-amino-acid chain; its full sequence is tRNA modification GTPase MnmE (461 aa).

(6S)-5-formyl-5,6,7,8-tetrahydrofolate is bound by residues arginine 23, glutamate 88, and arginine 127. Positions 223–382 (GLNTVIVGKP…VEEALVEIVY (160 aa)) constitute a TrmE-type G domain. Residue asparagine 233 coordinates K(+). Residues 233–238 (NVGKSS), 252–258 (TEVPGTT), and 277–280 (DTAG) contribute to the GTP site. Residue serine 237 participates in Mg(2+) binding. 3 residues coordinate K(+): threonine 252, valine 254, and threonine 257. Threonine 258 is a Mg(2+) binding site. Lysine 461 lines the (6S)-5-formyl-5,6,7,8-tetrahydrofolate pocket.

It belongs to the TRAFAC class TrmE-Era-EngA-EngB-Septin-like GTPase superfamily. TrmE GTPase family. Homodimer. Heterotetramer of two MnmE and two MnmG subunits. The cofactor is K(+).

It localises to the cytoplasm. Its function is as follows. Exhibits a very high intrinsic GTPase hydrolysis rate. Involved in the addition of a carboxymethylaminomethyl (cmnm) group at the wobble position (U34) of certain tRNAs, forming tRNA-cmnm(5)s(2)U34. In Alkaliphilus metalliredigens (strain QYMF), this protein is tRNA modification GTPase MnmE.